A 370-amino-acid polypeptide reads, in one-letter code: Uroporphyrinogen decarboxylase (370 aa).

Residues 29 to 33 (RQAGR), aspartate 79, tyrosine 155, serine 210, and histidine 342 each bind substrate.

The protein belongs to the uroporphyrinogen decarboxylase family. As to quaternary structure, homodimer.

It localises to the cytoplasm. The catalysed reaction is uroporphyrinogen III + 4 H(+) = coproporphyrinogen III + 4 CO2. Its pathway is porphyrin-containing compound metabolism; protoporphyrin-IX biosynthesis; coproporphyrinogen-III from 5-aminolevulinate: step 4/4. Its function is as follows. Catalyzes the decarboxylation of four acetate groups of uroporphyrinogen-III to yield coproporphyrinogen-III. This is Uroporphyrinogen decarboxylase from Verminephrobacter eiseniae (strain EF01-2).